The sequence spans 160 residues: MGIEGVLKKGFITTSADTVLNHMRTGSLWPVTFGLACCAVEMMHAGMARYDLDRFGIIFRPSPRQADLMIVAGTLTNKMAPALRRVYDQLAEPRWVLSMGSCANGGGYYHYSYSVVRGADRVVPVDVYVPGCPPTAEALIYGLIQLQQKIKRTSTIARDE.

Positions 37, 38, 102, and 132 each coordinate [4Fe-4S] cluster.

It belongs to the complex I 20 kDa subunit family. NDH-1 is composed of 14 different subunits. Subunits NuoB, C, D, E, F, and G constitute the peripheral sector of the complex. It depends on [4Fe-4S] cluster as a cofactor.

The protein localises to the cell inner membrane. It catalyses the reaction a quinone + NADH + 5 H(+)(in) = a quinol + NAD(+) + 4 H(+)(out). Functionally, NDH-1 shuttles electrons from NADH, via FMN and iron-sulfur (Fe-S) centers, to quinones in the respiratory chain. Couples the redox reaction to proton translocation (for every two electrons transferred, four hydrogen ions are translocated across the cytoplasmic membrane), and thus conserves the redox energy in a proton gradient. The polypeptide is NADH-quinone oxidoreductase subunit B (Neisseria gonorrhoeae (strain ATCC 700825 / FA 1090)).